Reading from the N-terminus, the 236-residue chain is tRNA (guanine-N(7)-)-methyltransferase (236 aa).

4 residues coordinate S-adenosyl-L-methionine: Asp35, Glu60, Asn87, and Asp113. Residue Asp113 is part of the active site. Lys117 and Asp149 together coordinate substrate. Residues 217–236 (EFEQHWQEIDNPGNAPTPDA) form a disordered region.

The protein belongs to the class I-like SAM-binding methyltransferase superfamily. TrmB family.

The catalysed reaction is guanosine(46) in tRNA + S-adenosyl-L-methionine = N(7)-methylguanosine(46) in tRNA + S-adenosyl-L-homocysteine. Its pathway is tRNA modification; N(7)-methylguanine-tRNA biosynthesis. In terms of biological role, catalyzes the formation of N(7)-methylguanine at position 46 (m7G46) in tRNA. The protein is tRNA (guanine-N(7)-)-methyltransferase of Synechococcus sp. (strain CC9902).